Here is a 309-residue protein sequence, read N- to C-terminus: HTH-type transcriptional activator AaeR (309 aa).

An HTH lysR-type domain is found at 1–59 (MERLKRMSVFAKVVEFGSFTAAARQLQMSVSSISQTVSKLEDELQVKLLNRSTRSIGLT). A DNA-binding region (H-T-H motif) is located at residues 19–38 (FTAAARQLQMSVSSISQTVS).

Belongs to the LysR transcriptional regulatory family.

Activity is regulated by p-hydroxybenzoic acid. Transcriptional regulator that activates expression of the aaeXAB operon, which is involved in the efflux of aromatic carboxylic acids such as p-hydroxybenzoic acid (pHBA). In the presence of the effector pHBA, acts by binding to a single target within the aaeXAB-aaeR intergenic region. In the absence of pHBA, binds more than 50 sites along the E.coli K12 genome, including genes related to biofilm formation and several genes involved in stress response, suggesting that it might play a role in quorum sensing in the absence of pHBA. The protein is HTH-type transcriptional activator AaeR of Escherichia coli (strain K12).